Here is a 654-residue protein sequence, read N- to C-terminus: Macrolide export ATP-binding/permease protein MacB (654 aa).

The ABC transporter domain maps to Ile6 to Ala244. Position 42 to 49 (Gly42 to Ser49) interacts with ATP. The next 4 helical transmembrane spans lie at Leu279 to Gly299, Ile534 to Val554, Met584 to Phe604, and Val617 to Leu637.

It belongs to the ABC transporter superfamily. Macrolide exporter (TC 3.A.1.122) family. As to quaternary structure, homodimer. Part of the tripartite efflux system MacAB-TolC, which is composed of an inner membrane transporter, MacB, a periplasmic membrane fusion protein, MacA, and an outer membrane component, TolC. The complex forms a large protein conduit and can translocate molecules across both the inner and outer membranes. Interacts with MacA.

Its subcellular location is the cell inner membrane. Functionally, part of the tripartite efflux system MacAB-TolC. MacB is a non-canonical ABC transporter that contains transmembrane domains (TMD), which form a pore in the inner membrane, and an ATP-binding domain (NBD), which is responsible for energy generation. Confers resistance against macrolides. In Hahella chejuensis (strain KCTC 2396), this protein is Macrolide export ATP-binding/permease protein MacB.